A 286-amino-acid polypeptide reads, in one-letter code: Digeranylgeranylglyceryl phosphate synthase (286 aa).

A run of 8 helical transmembrane segments spans residues 21-41, 42-62, 96-116, 133-155, 162-181, 214-234, 235-255, and 266-286; these read AVAA…FAVT, TAHV…GNAI, FLFV…IVLA, LPGV…GAAA, FGVV…REII, VLLV…FGIW, YLTL…QAPD, and RGMF…VAGI.

This sequence belongs to the UbiA prenyltransferase family. DGGGP synthase subfamily. Mg(2+) is required as a cofactor.

It localises to the cell membrane. It carries out the reaction sn-3-O-(geranylgeranyl)glycerol 1-phosphate + (2E,6E,10E)-geranylgeranyl diphosphate = 2,3-bis-O-(geranylgeranyl)-sn-glycerol 1-phosphate + diphosphate. Its pathway is membrane lipid metabolism; glycerophospholipid metabolism. Functionally, prenyltransferase that catalyzes the transfer of the geranylgeranyl moiety of geranylgeranyl diphosphate (GGPP) to the C2 hydroxyl of (S)-3-O-geranylgeranylglyceryl phosphate (GGGP). This reaction is the second ether-bond-formation step in the biosynthesis of archaeal membrane lipids. The protein is Digeranylgeranylglyceryl phosphate synthase of Haloquadratum walsbyi (strain DSM 16790 / HBSQ001).